A 181-amino-acid polypeptide reads, in one-letter code: Shikimate kinase 2 (181 aa).

Residue 12–17 (GCGKTT) coordinates ATP. Positions 16 and 32 each coordinate Mg(2+). Positions 34, 58, and 79 each coordinate substrate. The interval 112–126 (EAEPEADLRPTLTGK) is LID domain. Residue Arg120 participates in ATP binding. Substrate is bound at residue Arg139.

The protein belongs to the shikimate kinase family. AroL subfamily. In terms of assembly, monomer. The cofactor is Mg(2+).

It localises to the cytoplasm. It carries out the reaction shikimate + ATP = 3-phosphoshikimate + ADP + H(+). It functions in the pathway metabolic intermediate biosynthesis; chorismate biosynthesis; chorismate from D-erythrose 4-phosphate and phosphoenolpyruvate: step 5/7. Functionally, catalyzes the specific phosphorylation of the 3-hydroxyl group of shikimic acid using ATP as a cosubstrate. The polypeptide is Shikimate kinase 2 (Salmonella dublin (strain CT_02021853)).